Consider the following 324-residue polypeptide: MRSDSLPTTICQERKKDPIEMFHSGQLVKVCAPMVRYSKLAFRTLVRKYSCDLCYTPMIIAADFVRSIKARDSEFTTNQGDCPLIVQFAANDARLLSDAALLVCPYANGIDINCGCPQRWAMADGYGACLINKPELVHDMVRQVRNRVESPRFSVSIKIRIHDDLARTIDLCRKAEATGVSWITVHGRTVEERHQPVHYDAIKMIKENVSIPIVANGDIRSLKEAENVWQMTGTDGVMVARGLLANPAMFAGYEETPLKCIWDWVDISLELGTPFMCFHQHLMYMMEKITSRQEKRVFNALSSTSAVLDYLTDHYGDESLSKSL.

FMN-binding positions include 33–35 (PMV) and Q87. Residue C116 is the Proton donor of the active site. FMN is bound by residues K158, H186, 216–218 (NGD), and 240–241 (AR).

Belongs to the Dus family. Dus4 subfamily. Requires FMN as cofactor.

It carries out the reaction 5,6-dihydrouridine(20a) in tRNA + NADP(+) = uridine(20a) in tRNA + NADPH + H(+). The catalysed reaction is 5,6-dihydrouridine(20a) in tRNA + NAD(+) = uridine(20a) in tRNA + NADH + H(+). The enzyme catalyses 5,6-dihydrouridine(20b) in tRNA + NAD(+) = uridine(20b) in tRNA + NADH + H(+). It catalyses the reaction 5,6-dihydrouridine(20b) in tRNA + NADP(+) = uridine(20b) in tRNA + NADPH + H(+). Functionally, catalyzes the synthesis of dihydrouridine, a modified base found in the D-loop of most tRNAs. In Mus musculus (Mouse), this protein is tRNA-dihydrouridine(20a/20b) synthase [NAD(P)+]-like (Dus4l).